The chain runs to 374 residues: Trehalose-phosphate phosphatase B (374 aa).

It belongs to the trehalose phosphatase family. The cofactor is a divalent metal cation. Expressed in flowers.

It carries out the reaction alpha,alpha-trehalose 6-phosphate + H2O = alpha,alpha-trehalose + phosphate. Its pathway is glycan biosynthesis; trehalose biosynthesis. Removes the phosphate from trehalose 6-phosphate to produce free trehalose. Trehalose accumulation in plant may improve abiotic stress tolerance. This Arabidopsis thaliana (Mouse-ear cress) protein is Trehalose-phosphate phosphatase B (TPPB).